The sequence spans 1149 residues: Probable phospholipid-transporting ATPase IA (1149 aa).

The Cytoplasmic segment spans residues Met-1–Leu-65. Ser-25 bears the Phosphoserine mark. The residue at position 28 (Thr-28) is a Phosphothreonine. Ser-29 carries the post-translational modification Phosphoserine. Residues Pro-66 to Leu-86 traverse the membrane as a helical segment. The Extracellular portion of the chain corresponds to Leu-87 to Asp-92. The helical transmembrane segment at Val-93 to Lys-115 threads the bilayer. Residues Glu-116–Gln-297 lie on the Cytoplasmic side of the membrane. A helical membrane pass occupies residues Ile-298–Trp-319. Over Asn-320–Phe-344 the chain is Extracellular. The helical transmembrane segment at Leu-345–Val-366 threads the bilayer. Residues Lys-367–Lys-842 lie on the Cytoplasmic side of the membrane. Residue Asp-409 is the 4-aspartylphosphate intermediate of the active site. ATP is bound by residues Asp-409, Lys-410, Thr-411, Glu-493, Phe-534, Lys-557, Arg-590, Thr-670, Gly-671, Asp-672, Ala-726–Thr-733, Arg-760, and Lys-766. A Mg(2+)-binding site is contributed by Asp-409. Thr-411 serves as a coordination point for Mg(2+). Residue Asp-786 participates in Mg(2+) binding. ATP is bound by residues Asn-789 and Asp-790. Asp-790 lines the Mg(2+) pocket. The chain crosses the membrane as a helical span at residues Cys-843 to Phe-863. Residues Val-864 to Arg-875 are Extracellular-facing. The helical transmembrane segment at Trp-876–Ile-895 threads the bilayer. Residues Phe-896–Val-925 are Cytoplasmic-facing. A helical membrane pass occupies residues Phe-926 to Ala-947. Topologically, residues Leu-948–Asp-961 are extracellular. A helical transmembrane segment spans residues Tyr-962–Glu-984. The Cytoplasmic segment spans residues Thr-985 to Trp-990. The chain crosses the membrane as a helical span at residues Phe-991–Ser-1011. At Ser-1012–Met-1029 the chain is on the extracellular side. A helical transmembrane segment spans residues Leu-1030–Lys-1055. The Cytoplasmic segment spans residues Val-1056–Trp-1149. ATP is bound at residue Gly-1080–Ser-1087. The residue at position 1111 (Ser-1111) is a Phosphoserine.

It belongs to the cation transport ATPase (P-type) (TC 3.A.3) family. Type IV subfamily. As to quaternary structure, component of a P4-ATPase flippase complex which consists of a catalytic alpha subunit and an accessory beta subunit. Interacts with TMEM30A to form a flippase complex; this complex forms an intermediate phosphoenzyme. Interacts with TMEM30B; this interaction is reported conflictingly. Mg(2+) serves as cofactor. Post-translationally, cleaved by calpain in a caspase- and calcium influx-dependent manner during platelet apoptosis leading to a 100 kDa polypeptide. Kidney.

The protein resides in the cytoplasmic vesicle. It is found in the secretory vesicle. It localises to the chromaffin granule membrane. Its subcellular location is the cytoplasmic granule. The protein localises to the cell membrane. The protein resides in the endoplasmic reticulum. It is found in the golgi apparatus. The enzyme catalyses ATP + H2O + phospholipidSide 1 = ADP + phosphate + phospholipidSide 2.. The catalysed reaction is a 1,2-diacyl-sn-glycero-3-phospho-L-serine(out) + ATP + H2O = a 1,2-diacyl-sn-glycero-3-phospho-L-serine(in) + ADP + phosphate + H(+). Its function is as follows. Catalytic component of a P4-ATPase flippase complex which catalyzes the hydrolysis of ATP coupled to the transport of aminophospholipids from the outer to the inner leaflet of various membranes and ensures the maintenance of asymmetric distribution of phospholipids. Phospholipid translocation also seems to be implicated in vesicle formation and in uptake of lipid signaling molecules. In vitro, its ATPase activity is selectively and stereospecifically stimulated by phosphatidylserine (PS). The flippase complex ATP8A1:TMEM30A seems to play a role in regulation of cell migration probably involving flippase-mediated translocation of phosphatidylethanolamine (PE) at the cell membrane. Acts as aminophospholipid translocase at the cell membrane in neuronal cells. This Bos taurus (Bovine) protein is Probable phospholipid-transporting ATPase IA.